The sequence spans 525 residues: Vesicular inhibitory amino acid transporter (525 aa).

Topologically, residues 1–132 (MATLLRSKLS…WNVTNAIQGM (132 aa)) are cytoplasmic. The disordered stretch occupies residues 69-111 (PCGDEGAEPPVEGDIHYQRGSGAPLPPSGSKDQVGAGGEFGGH). The chain crosses the membrane as a helical span at residues 133 to 153 (FVLGLPYAILHGGYLGLFLII). Residues 154–204 (FAAVVCCYTGKILIACLYEENEDGEVVRVRDSYVAIANACCAPRFPTLGGR) lie on the Lumenal, vesicle side of the membrane. Position 186 is a 3'-nitrotyrosine (Tyr-186). The chain crosses the membrane as a helical span at residues 205–225 (VVNVAQIIELVMTCILYVVVS). Residues 226 to 265 (GNLMYNSFPGLPVSQKSWSIIATAVLLPCAFLKNLKAVSK) lie on the Cytoplasmic side of the membrane. A helical membrane pass occupies residues 266–286 (FSLLCTLAHFVINILVIAYCL). Topologically, residues 287 to 305 (SRARDWAWEKVKFYIDVKK) are lumenal, vesicle. Residues 306-326 (FPISIGIIVFSYTSQIFLPSL) traverse the membrane as a helical segment. The Cytoplasmic portion of the chain corresponds to 327–341 (EGNMQQPSEFHCMMN). The helical transmembrane segment at 342–362 (WTHIAACVLKGLFALVAYLTW) threads the bilayer. At 363 to 383 (ADETKEVITDNLPGSIRAVVN) the chain is on the lumenal, vesicle side. The helical transmembrane segment at 384-404 (IFLVAKALLSYPLPFFAAVEV) threads the bilayer. Topologically, residues 405–438 (LEKSLFQEGSRAFFPACYGGDGRLKSWGLTLRCA) are cytoplasmic. Residues 439 to 459 (LVVFTLLMAIYVPHFALLMGL) form a helical membrane-spanning segment. Residues 460–461 (TG) are Lumenal, vesicle-facing. The chain crosses the membrane as a helical span at residues 462–482 (SLTGAGLCFLLPSLFHLRLLW). Topologically, residues 483–489 (RKLLWHQ) are cytoplasmic. The chain crosses the membrane as a helical span at residues 490–510 (VFFDVAIFVIGGICSVSGFVH). At 511 to 525 (SLEGLIEAYRTNAED) the chain is on the lumenal, vesicle side.

It belongs to the amino acid/polyamine transporter 2 family.

It localises to the cytoplasmic vesicle membrane. It is found in the presynapse. The catalysed reaction is 4-aminobutanoate(out) + n H(+)(in) = 4-aminobutanoate(in) + n H(+)(out). The enzyme catalyses glycine(out) + n H(+)(in) = glycine(in) + n H(+)(out). It catalyses the reaction beta-alanine(out) + n H(+)(in) = beta-alanine(in) + n H(+)(out). Its function is as follows. Antiporter that exchanges vesicular protons for cytosolic 4-aminobutanoate or to a lesser extend glycine, thus allowing their secretion from nerve terminals. The transport is equally dependent on the chemical and electrical components of the proton gradient. May also transport beta-alanine. Acidification of GABAergic synaptic vesicles is a prerequisite for 4-aminobutanoate uptake. In Macaca fascicularis (Crab-eating macaque), this protein is Vesicular inhibitory amino acid transporter.